The following is an 846-amino-acid chain: Translation initiation factor IF-2 (846 aa).

The segment at 198–219 (YKREEEEKKSKAKKAGGKGFKK) is disordered. Basic residues predominate over residues 207-219 (SKAKKAGGKGFKK). In terms of domain architecture, tr-type G spans 345–512 (SRAPVVTIMG…AVLLQSEVLE (168 aa)). Residues 354 to 361 (GHVDHGKT) form a G1 region. 354 to 361 (GHVDHGKT) is a binding site for GTP. Residues 379 to 383 (GITQH) are G2. The G3 stretch occupies residues 400 to 403 (DTPG). Residues 400 to 404 (DTPGH) and 454 to 457 (NKID) contribute to the GTP site. The tract at residues 454-457 (NKID) is G4. The interval 490–492 (SAK) is G5.

It belongs to the TRAFAC class translation factor GTPase superfamily. Classic translation factor GTPase family. IF-2 subfamily.

It localises to the cytoplasm. Functionally, one of the essential components for the initiation of protein synthesis. Protects formylmethionyl-tRNA from spontaneous hydrolysis and promotes its binding to the 30S ribosomal subunits. Also involved in the hydrolysis of GTP during the formation of the 70S ribosomal complex. The sequence is that of Translation initiation factor IF-2 from Francisella tularensis subsp. holarctica (strain OSU18).